The sequence spans 533 residues: Beta-1,4 N-acetylgalactosaminyltransferase 1 (533 aa).

Residues 1–7 lie on the Cytoplasmic side of the membrane; it reads MRLDRRA. A helical; Signal-anchor for type II membrane protein transmembrane segment spans residues 8–25; sequence LYALVLLLACASLGLLYS. At 26 to 533 the chain is on the lumenal side; the sequence is STRNAPSLPN…KHRLQCMTAE (508 aa). 3 N-linked (GlcNAc...) asparagine glycosylation sites follow: Asn79, Asn179, and Asn274. An intrachain disulfide couples Cys429 to Cys476.

It belongs to the glycosyltransferase 2 family. As to quaternary structure, homodimer; disulfide-linked. Most abundant in brain, liver, lung, spleen and testis.

The protein resides in the golgi apparatus membrane. The catalysed reaction is a ganglioside GM3 (d18:1(4E)) + UDP-N-acetyl-alpha-D-galactosamine = a ganglioside GM2 (d18:1(4E)) + UDP + H(+). The enzyme catalyses a ganglioside GD3 (d18:1(4E)) + UDP-N-acetyl-alpha-D-galactosamine = a ganglioside GD2 (d18:1(4E)) + UDP + H(+). It catalyses the reaction a ganglioside GM3 + UDP-N-acetyl-alpha-D-galactosamine = a ganglioside GM2 + UDP + H(+). It carries out the reaction a ganglioside GD3 + UDP-N-acetyl-alpha-D-galactosamine = a ganglioside GD2 + UDP + H(+). The catalysed reaction is a ganglioside GD1a + UDP-N-acetyl-alpha-D-galactosamine = a ganglioside GalNAc-GD1a + UDP + H(+). The enzyme catalyses a ganglioside GT3 (d18:1(4E)) + UDP-N-acetyl-alpha-D-galactosamine = a ganglioside GT2 (d18:1(4E)) + UDP + H(+). It catalyses the reaction a beta-D-Gal-(1-&gt;4)-beta-D-Glc-(1&lt;-&gt;1)-Cer(d18:1(4E)) + UDP-N-acetyl-alpha-D-galactosamine = a ganglioside GA2 (d18:1(4E)) + UDP + H(+). It carries out the reaction a neolactoside IV(3)-alpha-NeuGc-nLc4Cer + UDP-N-acetyl-alpha-D-galactosamine = a neolactoside IV(4)-beta-GalNAc-IV(3)-alpha-NeuGc-nLc4Cer + UDP + H(+). Its pathway is sphingolipid metabolism. Functionally, involved in the biosynthesis of gangliosides GM2, GD2 and GA2. Its function is as follows. Involved in the biosynthesis of gangliosides GM2, GD2, GT2 and GA2 from GM3, GD3, GT3 and GA3, respectively. The chain is Beta-1,4 N-acetylgalactosaminyltransferase 1 from Mus musculus (Mouse).